A 363-amino-acid chain; its full sequence is tRNA-specific 2-thiouridylase MnmA (363 aa).

ATP-binding positions include 6–13 (AMSGGVDS) and L32. C101 acts as the Nucleophile in catalysis. C101 and C193 are joined by a disulfide. G125 provides a ligand contact to ATP. Residues 143–145 (KDQ) are interaction with tRNA. Residue C193 is the Cysteine persulfide intermediate of the active site.

This sequence belongs to the MnmA/TRMU family.

The protein resides in the cytoplasm. It catalyses the reaction S-sulfanyl-L-cysteinyl-[protein] + uridine(34) in tRNA + AH2 + ATP = 2-thiouridine(34) in tRNA + L-cysteinyl-[protein] + A + AMP + diphosphate + H(+). Its function is as follows. Catalyzes the 2-thiolation of uridine at the wobble position (U34) of tRNA, leading to the formation of s(2)U34. This chain is tRNA-specific 2-thiouridylase MnmA, found in Mycobacterium marinum (strain ATCC BAA-535 / M).